The primary structure comprises 380 residues: MTPMRKTNPLMKLINHSLIDLPTPSNISAWWNFGSLLGACLIIQTITGLFLAMHYSPDATTAFSSIAHITRDVNYGWMIRHLHANGASMLFICLFLHIGRGLYYGSFTHLETWNIGIILLFMTMMTAFMGYVLPWGQMSFWGATVITNLLSAVPYIGTDLVQWVWGGYSVNSPTLTRFFTLHFMLPFIITALTTLHLLFLHETGSNNPLGIPSHSDKITFHPYYTIKDILGLLLFLLALMTLTLLSPDLLSDPDNYTLANPLSTPPHIKPEWYFLFAYAILRSVPNKLGGVMALMLSILILTTIPALHTSKQQSMTFRPLSQFLYWLLITDLLVLTWIGGQPVSYPFITIGQVASVLYFTTILLLMPTSSLIENYMLKWT.

A run of 4 helical transmembrane segments spans residues 33-53 (FGSL…FLAM), 77-98 (WMIR…FLHI), 113-133 (WNIG…GYVL), and 178-198 (FFTL…LHLL). The heme b site is built by H83 and H97. The heme b site is built by H182 and H196. H201 contacts a ubiquinone. A run of 4 helical transmembrane segments spans residues 226–246 (IKDI…TLLS), 288–308 (LGGV…PALH), 320–340 (LSQF…WIGG), and 347–367 (FITI…LLMP).

It belongs to the cytochrome b family. As to quaternary structure, the cytochrome bc1 complex contains 11 subunits: 3 respiratory subunits (MT-CYB, CYC1 and UQCRFS1), 2 core proteins (UQCRC1 and UQCRC2) and 6 low-molecular weight proteins (UQCRH/QCR6, UQCRB/QCR7, UQCRQ/QCR8, UQCR10/QCR9, UQCR11/QCR10 and a cleavage product of UQCRFS1). This cytochrome bc1 complex then forms a dimer. Heme b serves as cofactor.

The protein localises to the mitochondrion inner membrane. In terms of biological role, component of the ubiquinol-cytochrome c reductase complex (complex III or cytochrome b-c1 complex) that is part of the mitochondrial respiratory chain. The b-c1 complex mediates electron transfer from ubiquinol to cytochrome c. Contributes to the generation of a proton gradient across the mitochondrial membrane that is then used for ATP synthesis. This Pongo pygmaeus (Bornean orangutan) protein is Cytochrome b (MT-CYB).